A 438-amino-acid chain; its full sequence is MEYFKNVPQIKYEGPKSNNPYAFKFYNPDEIIDGKPLKEHLRFSVAYWHTFTANGTDPFGAPTMQRPWDHFTDPMDIAKARVEAAFELFEKLDVPFFCFHDRDIAPEGETLRETNKNLDTIVAMIKDYLKTSKTKVLWGTANLFSNPRFVHGAATSCNADVFAYAAAQVKKALEITKELGGQNYVFWGGREGYETLLNTDMELELDNLARFLHMAVEYAQEIGFEGQFLIEPKPKEPTKHQYDFDAASVHAFLKKYDLDKYFKLNIEANHATLAGHDFQHELRYARINNMLGSIDANMGDMLLGWDTDQYPTDIRMTTLAMYEVIKMGGFNKGGLNFDAKVRRASFEPEDLFLGHIAGMDAFAKGFKVAYKLVKDGVFDRFIEERYKSYREGIGAEIVSGKANFKTLEEYALNNPKIENKSGKQELLESILNQYLFSE.

Residues H100 and D103 contribute to the active site. Mg(2+) is bound by residues E231, E267, H270, D295, D306, D308, and D338.

It belongs to the xylose isomerase family. As to quaternary structure, homotetramer. Requires Mg(2+) as cofactor.

It is found in the cytoplasm. The enzyme catalyses alpha-D-xylose = alpha-D-xylulofuranose. This chain is Xylose isomerase (xylA), found in Thermoanaerobacter pseudethanolicus (strain ATCC 33223 / 39E) (Clostridium thermohydrosulfuricum).